The following is a 148-amino-acid chain: NADPH-dependent 7-cyano-7-deazaguanine reductase (148 aa).

Residue cysteine 50 is the Thioimide intermediate of the active site. Aspartate 57 functions as the Proton donor in the catalytic mechanism. Residues 72 to 74 (VES) and 91 to 92 (HE) each bind substrate.

Belongs to the GTP cyclohydrolase I family. QueF type 1 subfamily.

It localises to the cytoplasm. The catalysed reaction is 7-aminomethyl-7-carbaguanine + 2 NADP(+) = 7-cyano-7-deazaguanine + 2 NADPH + 3 H(+). The protein operates within tRNA modification; tRNA-queuosine biosynthesis. Catalyzes the NADPH-dependent reduction of 7-cyano-7-deazaguanine (preQ0) to 7-aminomethyl-7-deazaguanine (preQ1). The chain is NADPH-dependent 7-cyano-7-deazaguanine reductase from Helicobacter pylori (strain P12).